Consider the following 775-residue polypeptide: GRIP and coiled-coil domain-containing protein 1 (775 aa).

Residues 13-61 adopt a coiled-coil conformation; that stretch reads SKKDLLETIETQKKQLLQYQARLKDVVRAYKSLLKEKEALEASIKVLSV. The segment covering 84–93 has biased composition (basic and acidic residues); that stretch reads DDRCSTHSED. Disordered regions lie at residues 84–153 and 614–639; these read DDRC…AGGE and GLPGRRSPVGGGGPGDPADTSSSDSL. Low complexity-rich tracts occupy residues 94–110, 133–147, and 629–638; these read STGTATSLDTAASLTST, ASWSESGVSSSSGDG, and DPADTSSSDS. Residues 153–763 adopt a coiled-coil conformation; sequence EVDKRLHQLK…PEEKQVIMRL (611 aa). Residues 713–763 enclose the GRIP domain; sequence QSREGANLEYLKNIIYRFLTLPDSLGRQQTLTAILTILHFSPEEKQVIMRL.

The protein localises to the cytoplasm. It localises to the golgi apparatus membrane. Its function is as follows. Probably involved in maintaining Golgi structure. This chain is GRIP and coiled-coil domain-containing protein 1 (GCC1), found in Homo sapiens (Human).